Here is a 648-residue protein sequence, read N- to C-terminus: Calpain-5 (648 aa).

A Calpain catalytic domain is found at 28-353; the sequence is PFVDTLFPPT…FTDISLCQLF (326 aa). Catalysis depends on residues Cys-83, His-252, and Asn-290. The segment at 354–509 is domain III; that stretch reads NTSVFSFSRS…VYSDEHIHFS (156 aa). One can recognise a C2 domain in the interval 502-625; that stretch reads SDEHIHFSPL…ENRDTTLQLT (124 aa).

The protein belongs to the peptidase C2 family. Ca(2+) is required as a cofactor. Expressed in neuronal, but not in GABA-ergic neurons, intestinal, hypodermal and excretory tissues.

Its function is as follows. Required for the correct female sexual development of the soma and germline in hermaphrodite animals, while being fully dispensable in males. Has calcium-dependent proteolytic activity and is involved in the cleavage of tra-2, for which it acts as a potentiator. Capable of calcium-dependent autolysis. Part of the necrosis cell death pathway. Required for necrosis of intestinal cells induced by B.thuringiensis endotoxin Cry6Aa. The polypeptide is Calpain-5 (Caenorhabditis elegans).